The chain runs to 158 residues: Cyclic pyranopterin monophosphate synthase (158 aa).

Substrate is bound by residues 76-78 (LCH) and 114-115 (ME). Asp-129 is an active-site residue.

The protein belongs to the MoaC family. Homohexamer; trimer of dimers.

It carries out the reaction (8S)-3',8-cyclo-7,8-dihydroguanosine 5'-triphosphate = cyclic pyranopterin phosphate + diphosphate. The protein operates within cofactor biosynthesis; molybdopterin biosynthesis. Functionally, catalyzes the conversion of (8S)-3',8-cyclo-7,8-dihydroguanosine 5'-triphosphate to cyclic pyranopterin monophosphate (cPMP). The polypeptide is Cyclic pyranopterin monophosphate synthase (Shewanella loihica (strain ATCC BAA-1088 / PV-4)).